The primary structure comprises 58 residues: COP9 signalosome complex subunit 6b (58 aa).

Belongs to the peptidase M67A family. CSN6 subfamily. As to quaternary structure, component of the CSN complex, probably composed of CSN1, CSN2, CSN3, CSN4, CSN5 (CSN5A or CSN5B), CSN6 (CSN6A or CSN6B), CSN7 and CSN8.

It localises to the cytoplasm. The protein resides in the nucleus. In terms of biological role, component of the COP9 signalosome complex (CSN), a complex involved in various cellular and developmental processes such as photomorphogenesis and auxin and jasmonate responses. The CSN complex is an essential regulator of the ubiquitin (Ubl) conjugation pathway by mediating the deneddylation of the cullin subunits of SCF-type E3 ligase complexes, leading to decrease the Ubl ligase activity of SCF. It is involved in repression of photomorphogenesis in darkness by regulating the activity of COP1-containing Ubl ligase complexes. The polypeptide is COP9 signalosome complex subunit 6b (CSN6B) (Brassica oleracea (Wild cabbage)).